A 489-amino-acid chain; its full sequence is Bypass of stop codon protein 5 (489 aa).

The tract at residues 1–42 (MQESKEPQNKFEGCQRISSSSSTLFGGTSFEEPRCGTSQGKE) is disordered. A compositionally biased stretch (low complexity) spans 18–30 (SSSSSTLFGGTSF). Phosphoserine is present on residues Ser111 and Ser350.

Belongs to the BUL1 family.

In terms of biological role, appears to play a role in translation fidelity, and may act when translation is compromised. May be a component of the ubiquitination pathway. The protein is Bypass of stop codon protein 5 (BSC5) of Saccharomyces cerevisiae (strain ATCC 204508 / S288c) (Baker's yeast).